The sequence spans 524 residues: Cytochrome P450 monooxygenase alt1 (524 aa).

The helical transmembrane segment at 24–44 (IANMLSVIAFSICISPIVYFL) threads the bilayer. A heme-binding site is contributed by cysteine 469.

Belongs to the cytochrome P450 family. It depends on heme as a cofactor.

The protein resides in the membrane. It functions in the pathway secondary metabolite biosynthesis. Cytochrome P450 monooxygenase; part of the gene cluster that mediates the biosynthesis of alternapyrone derivatives. Alternapyrone is a decaketide with octa-methylation from methionine on every C2 unit except the third unit. All the domains in the polyketide synthase alt5 are apparently involved in alternapyrone synthesis, that is, the 8 CMeT, 7 KR, 7 DH, and 4 ER reactions in the 9 KS-mediated condensation steps required for alternapyrone synthesis. the alternapyrone produced by alt5 might be intensively modified by cytochrome P450 monooxygenases alt1, alt2 and alt3 and FAD-dependent oxidoreductase alt4 present in the alt gene cluster. The protein is Cytochrome P450 monooxygenase alt1 of Alternaria solani.